Reading from the N-terminus, the 388-residue chain is Probable fatty acid desaturase DES1 (388 aa).

A disordered region spans residues 1-33; sequence MATTPMTVVDHEAEEAVAKAREDDKSRQVDAFD. The segment covering 9–30 has biased composition (basic and acidic residues); that stretch reads VDHEAEEAVAKAREDDKSRQVD. A run of 2 helical transmembrane segments spans residues 62-82 and 85-105; these read LWYV…AAAM and WAVW…FFVL. The Histidine box-1 signature appears at 107–111; that stretch reads HDCGH. Residues 119–139 traverse the membrane as a helical segment; it reads TLNSVVGHLLHSFILIPYHGW. The short motif at 143 to 147 is the Histidine box-2 element; the sequence is HRTHH. A run of 3 helical transmembrane segments spans residues 177-194, 226-246, and 248-268; these read IRFT…YLFY, WCIM…LQVL, and MYGL…YLHH. The Histidine box-3 motif lies at 310–314; that stretch reads HVIHH.

This sequence belongs to the fatty acid desaturase type 1 family. As to expression, highly expressed in root hair cells. Barely detected in panicle, shoot apex, stems and leaves.

It is found in the membrane. It participates in lipid metabolism; polyunsaturated fatty acid biosynthesis. The polypeptide is Probable fatty acid desaturase DES1 (Sorghum bicolor (Sorghum)).